The following is a 284-amino-acid chain: Urease accessory protein UreD (284 aa).

This sequence belongs to the UreD family. In terms of assembly, ureD, UreF and UreG form a complex that acts as a GTP-hydrolysis-dependent molecular chaperone, activating the urease apoprotein by helping to assemble the nickel containing metallocenter of UreC. The UreE protein probably delivers the nickel.

The protein resides in the cytoplasm. In terms of biological role, required for maturation of urease via the functional incorporation of the urease nickel metallocenter. The polypeptide is Urease accessory protein UreD (Bordetella bronchiseptica (strain ATCC BAA-588 / NCTC 13252 / RB50) (Alcaligenes bronchisepticus)).